A 332-amino-acid chain; its full sequence is Phosphate acetyltransferase (332 aa).

It belongs to the phosphate acetyltransferase and butyryltransferase family.

The protein resides in the cytoplasm. It catalyses the reaction acetyl-CoA + phosphate = acetyl phosphate + CoA. It functions in the pathway metabolic intermediate biosynthesis; acetyl-CoA biosynthesis; acetyl-CoA from acetate: step 2/2. The protein is Phosphate acetyltransferase (pta) of Acetivibrio thermocellus (strain ATCC 27405 / DSM 1237 / JCM 9322 / NBRC 103400 / NCIMB 10682 / NRRL B-4536 / VPI 7372) (Clostridium thermocellum).